A 205-amino-acid polypeptide reads, in one-letter code: Holliday junction branch migration complex subunit RuvA (205 aa).

The domain I stretch occupies residues 1 to 64 (MIGKLRGIVD…DEAIRLIGFT (64 aa)). A domain II region spans residues 65-143 (TDSEREWFRL…DSMGLSAALE (79 aa)). The flexible linker stretch occupies residues 144 to 152 (VGVNGEAVS). The segment at 153 to 205 (SVSAPARDAVSALVNLGYPQAQAMGAVAAAAKRLDDAASTEQLIRHGLKELAR) is domain III.

It belongs to the RuvA family. In terms of assembly, homotetramer. Forms an RuvA(8)-RuvB(12)-Holliday junction (HJ) complex. HJ DNA is sandwiched between 2 RuvA tetramers; dsDNA enters through RuvA and exits via RuvB. An RuvB hexamer assembles on each DNA strand where it exits the tetramer. Each RuvB hexamer is contacted by two RuvA subunits (via domain III) on 2 adjacent RuvB subunits; this complex drives branch migration. In the full resolvosome a probable DNA-RuvA(4)-RuvB(12)-RuvC(2) complex forms which resolves the HJ.

Its subcellular location is the cytoplasm. The RuvA-RuvB-RuvC complex processes Holliday junction (HJ) DNA during genetic recombination and DNA repair, while the RuvA-RuvB complex plays an important role in the rescue of blocked DNA replication forks via replication fork reversal (RFR). RuvA specifically binds to HJ cruciform DNA, conferring on it an open structure. The RuvB hexamer acts as an ATP-dependent pump, pulling dsDNA into and through the RuvAB complex. HJ branch migration allows RuvC to scan DNA until it finds its consensus sequence, where it cleaves and resolves the cruciform DNA. This is Holliday junction branch migration complex subunit RuvA from Parvibaculum lavamentivorans (strain DS-1 / DSM 13023 / NCIMB 13966).